Consider the following 121-residue polypeptide: Fluoride-specific ion channel FluC 1 (121 aa).

4 helical membrane-spanning segments follow: residues Y3–L23, I29–A49, T67–F87, and F92–L112. The Na(+) site is built by G71 and T74.

This sequence belongs to the fluoride channel Fluc/FEX (TC 1.A.43) family.

The protein localises to the cell membrane. It catalyses the reaction fluoride(in) = fluoride(out). Na(+) is not transported, but it plays an essential structural role and its presence is essential for fluoride channel function. Functionally, fluoride-specific ion channel. Important for reducing fluoride concentration in the cell, thus reducing its toxicity. The polypeptide is Fluoride-specific ion channel FluC 1 (Staphylococcus epidermidis (strain ATCC 35984 / DSM 28319 / BCRC 17069 / CCUG 31568 / BM 3577 / RP62A)).